We begin with the raw amino-acid sequence, 166 residues long: Small ribosomal subunit protein uS5 (166 aa).

An S5 DRBM domain is found at 10-73 (QIEKLISLNR…TSARKNLRFV (64 aa)).

The protein belongs to the universal ribosomal protein uS5 family. As to quaternary structure, part of the 30S ribosomal subunit. Contacts proteins S4 and S8.

In terms of biological role, with S4 and S12 plays an important role in translational accuracy. Its function is as follows. Located at the back of the 30S subunit body where it stabilizes the conformation of the head with respect to the body. The sequence is that of Small ribosomal subunit protein uS5 from Borrelia garinii subsp. bavariensis (strain ATCC BAA-2496 / DSM 23469 / PBi) (Borreliella bavariensis).